A 149-amino-acid polypeptide reads, in one-letter code: 3-dehydroquinate dehydratase (149 aa).

Catalysis depends on Tyr-26, which acts as the Proton acceptor. Positions 77, 83, and 90 each coordinate substrate. The active-site Proton donor is the His-103. Substrate is bound by residues 104-105 (LS) and Arg-114.

Belongs to the type-II 3-dehydroquinase family. As to quaternary structure, homododecamer.

It carries out the reaction 3-dehydroquinate = 3-dehydroshikimate + H2O. The protein operates within metabolic intermediate biosynthesis; chorismate biosynthesis; chorismate from D-erythrose 4-phosphate and phosphoenolpyruvate: step 3/7. Catalyzes a trans-dehydration via an enolate intermediate. The sequence is that of 3-dehydroquinate dehydratase from Aliivibrio salmonicida (strain LFI1238) (Vibrio salmonicida (strain LFI1238)).